The following is a 1113-amino-acid chain: Coiled-coil domain-containing protein 158 (1113 aa).

Residues 1–14 are compositionally biased toward polar residues; it reads MESKAWESNNEDLL. Residues 1–26 form a disordered region; it reads MESKAWESNNEDLLSSSGVTSNGGSS. Positions 15–26 are enriched in low complexity; that stretch reads SSSGVTSNGGSS. Coiled coils occupy residues 72–183 and 243–833; these read GKEH…LSHE and VEDQ…QEQE. Disordered stretches follow at residues 848–902 and 955–1062; these read LQGP…DPTR and CHRS…IETT. 5 stretches are compositionally biased toward polar residues: residues 867–894, 955–974, 994–1017, 1024–1040, and 1053–1062; these read ASVTRSHSNVPSSQSTASFLSHHSTKAN, CHRSNNSLRDSTEGSKSSET, FTFTSAASPSVKNSASRSFNSSPK, LLTSSVEGSIGSTSQYR, and DSQSPPIETT. Positions 1061–1113 form a coiled coil; it reads TTGKTCRKLQNRLESLQTLVEDLQLKNQAMSSMIRNQEKRIQKVKDQEKMLLK.

This Homo sapiens (Human) protein is Coiled-coil domain-containing protein 158 (CCDC158).